Here is a 267-residue protein sequence, read N- to C-terminus: tRNA (guanine-N(1)-)-methyltransferase (267 aa).

Residues Gly-112 and Ile-131 to Leu-136 contribute to the S-adenosyl-L-methionine site. The span at Asp-245–Arg-259 shows a compositional bias: basic and acidic residues. Residues Asp-245–Ser-267 form a disordered region.

It belongs to the RNA methyltransferase TrmD family. As to quaternary structure, homodimer.

The protein localises to the cytoplasm. It catalyses the reaction guanosine(37) in tRNA + S-adenosyl-L-methionine = N(1)-methylguanosine(37) in tRNA + S-adenosyl-L-homocysteine + H(+). Specifically methylates guanosine-37 in various tRNAs. The protein is tRNA (guanine-N(1)-)-methyltransferase of Spiroplasma kunkelii.